The following is a 353-amino-acid chain: MTVRDWANRGQTYVNARAPNLLGRFRSTDDEDENNPSTELATDTTSAYGSTAASVVTMANSKPDDVSLYATSSHHHEYFTGSAWIHPVYTKEQMDALEVNHRKTETFSDRVALRAILLMRIIFDLCTGYKHPKEGEAHLPKFRMTTRQWLDRFLFLESIAGVPGMVAGMIRHLHSLRALRRDRAWIESLVEEAYNERMHLLTFLKLQKPSVQMRTGLLIGQIIFYNLFFISYLISPATCHRFVGYLEEEAVITYTRCLEDIDAGRLPELASMEVPDIARTYWHMEDDCTMRDLIQYVRADEAKHCEVNHTFGNLHQTSDRNPFALVIDNGRPQPSKDLTTFRSVGWRRDEIAN.

Residues 25-45 (FRSTDDEDENNPSTELATDTT) are disordered. Residues 35–45 (NPSTELATDTT) show a composition bias toward polar residues. Residues 153-173 (FLFLESIAGVPGMVAGMIRHL) traverse the membrane as a helical segment. 3 residues coordinate Fe cation: glutamate 157, glutamate 196, and histidine 199. Residues 217-237 (LLIGQIIFYNLFFISYLISPA) traverse the membrane as a helical segment. Residues glutamate 247, glutamate 301, and histidine 304 each contribute to the Fe cation site.

It belongs to the alternative oxidase family. Requires Fe cation as cofactor.

The protein resides in the mitochondrion inner membrane. Functionally, catalyzes cyanide-resistant oxygen consumption. May increase respiration when the cytochrome respiratory pathway is restricted, or in response to low temperatures. The sequence is that of Alternative oxidase, mitochondrial (AOX) from Yarrowia lipolytica (strain CLIB 122 / E 150) (Yeast).